We begin with the raw amino-acid sequence, 604 residues long: Protein glass (604 aa).

Disordered regions lie at residues 111-139 (ISTTPPASSGNGSSNNGAGGGSSGNHGYW), 199-237 (NSHNHGQMHSQHQQHQHQQSQVQASHVGNSLLQSSGGNN), 359-400 (LPPL…SPTS), and 414-434 (EDEEDSNEDLDGDEGSSGGEM). Composition is skewed to low complexity over residues 117 to 126 (ASSGNGSSNN) and 200 to 237 (SHNHGQMHSQHQQHQHQQSQVQASHVGNSLLQSSGGNN). Residues 414 to 427 (EDEEDSNEDLDGDE) show a composition bias toward acidic residues. 5 consecutive C2H2-type zinc fingers follow at residues 437–459 (NLCRLCGKTYARPSTLKTHLRTH), 465–487 (YRCPDCNKSFSQAANLTAHVRTH), 493–515 (FRCPICDRRFSQSSSVTTHMRTH), 521–543 (YRCSSCKKSFSDSSTLTKHLRIH), and 549–571 (YQCKLCLLRFSQSGNLNRHMRVH). The disordered stretch occupies residues 566-604 (RHMRVHGNNNSSNGSNGATGVGGESSTGSGVGGGNSLLT). Over residues 572 to 581 (GNNNSSNGSN) the composition is skewed to low complexity. Gly residues predominate over residues 582-604 (GATGVGGESSTGSGVGGGNSLLT).

The protein localises to the nucleus. Functionally, transcription factor required for gene expression specific to photoreceptor cells. The protein is Protein glass (gl) of Drosophila melanogaster (Fruit fly).